Reading from the N-terminus, the 292-residue chain is Zinc finger protein OZF (292 aa).

10 C2H2-type zinc fingers span residues 16–38 (FACK…EHFH), 44–66 (FECN…QNTH), 72–94 (FECN…QKIH), 100–122 (FECK…QRTH), 128–150 (FVCK…EKIH), 156–178 (FKCS…QNIH), 184–206 (YECN…VRIH), 212–234 (YECN…VRSH), 240–262 (YGCN…LRIH), and 268–290 (YQCS…QKIH). Glycyl lysine isopeptide (Lys-Gly) (interchain with G-Cter in SUMO2) cross-links involve residues K28, K51, and K56. Residues K157 and K169 each participate in a glycyl lysine isopeptide (Lys-Gly) (interchain with G-Cter in SUMO) cross-link. Residue K173 forms a Glycyl lysine isopeptide (Lys-Gly) (interchain with G-Cter in SUMO2) linkage. The interaction with TERF2IP stretch occupies residues 212-292 (YECNVCGKAF…HIRHQKIHTH (81 aa)).

Belongs to the krueppel C2H2-type zinc-finger protein family. As to quaternary structure, binds DNA. Interacts with SUMO conjugating enzyme UBC9/UBE2I. Interacts with the telomeric protein TERF2IP. In terms of processing, sumoylated. Liver, skeletal and heart muscle, mammary cells. Very low levels in brain, lung, placenta and kidney. Strongly overexpressed in many pancreas and colorectal cancers. Increased gene copy numbers are detected in 3 of 12 tumor cell lines and 2 of 12 primary pancreatic carcinomas. Overexpressed in 80% of colorectal cancers.

It localises to the nucleus. The chain is Zinc finger protein OZF (ZNF146) from Homo sapiens (Human).